Consider the following 248-residue polypeptide: MRVDGREKNALRKIEVTPDYLMHPEGSVLIASGNTKVICSASVETKVPPFMRGEGRGWISAEYSMLPRATNTRNIRESSKGKVTGRTMEIQRLIGRALRAVVDLDALGERTIWLDCDVIQADGGTRTASITGAFIAMVMAIAKLDEQVPFTKFPVKDFLAATSVGVLEEGGTVLDLNYIEDSAAQVDMNIIMTGSGAFVELQGTGEEATFSETELAELIALGKKGISELIEIQKEILGDKITARIKGE.

Phosphate is bound by residues R86 and G124–R126.

This sequence belongs to the RNase PH family. Homohexameric ring arranged as a trimer of dimers.

The catalysed reaction is tRNA(n+1) + phosphate = tRNA(n) + a ribonucleoside 5'-diphosphate. Phosphorolytic 3'-5' exoribonuclease that plays an important role in tRNA 3'-end maturation. Removes nucleotide residues following the 3'-CCA terminus of tRNAs; can also add nucleotides to the ends of RNA molecules by using nucleoside diphosphates as substrates, but this may not be physiologically important. Probably plays a role in initiation of 16S rRNA degradation (leading to ribosome degradation) during starvation. In Listeria welshimeri serovar 6b (strain ATCC 35897 / DSM 20650 / CCUG 15529 / CIP 8149 / NCTC 11857 / SLCC 5334 / V8), this protein is Ribonuclease PH.